The chain runs to 190 residues: uncharacterized protein (190 aa).

A helical transmembrane segment spans residues 12-34 (LLGLSIFLTTFLFVANFLPGIFA).

Its subcellular location is the membrane. This is an uncharacterized protein from Archaeoglobus fulgidus (strain ATCC 49558 / DSM 4304 / JCM 9628 / NBRC 100126 / VC-16).